The chain runs to 164 residues: MKRIAICPGSFDPITNGHLDIIERAAPIFDEIIVAVLNNSSKQPLFSVQERMELISEVTEHLPHIKVDAFNGLLVDYASTVGADVIVRGLRAVSDFEYEMQVASINKKMNDQIETLFMMTNNQYSFLSSSIVKEAAKYGASVAGLVPPAVEEALRHKYSEGELR.

A substrate-binding site is contributed by S10. ATP is bound by residues 10 to 11 and H18; that span reads SF. Substrate is bound by residues K42, L74, and R88. Residues 89 to 91, E99, and 124 to 130 each bind ATP; these read GLR and YSFLSSS.

This sequence belongs to the bacterial CoaD family. Homohexamer. Requires Mg(2+) as cofactor.

It is found in the cytoplasm. The catalysed reaction is (R)-4'-phosphopantetheine + ATP + H(+) = 3'-dephospho-CoA + diphosphate. Its pathway is cofactor biosynthesis; coenzyme A biosynthesis; CoA from (R)-pantothenate: step 4/5. Its function is as follows. Reversibly transfers an adenylyl group from ATP to 4'-phosphopantetheine, yielding dephospho-CoA (dPCoA) and pyrophosphate. The sequence is that of Phosphopantetheine adenylyltransferase from Exiguobacterium sibiricum (strain DSM 17290 / CCUG 55495 / CIP 109462 / JCM 13490 / 255-15).